A 162-amino-acid chain; its full sequence is Crossover junction endodeoxyribonuclease RuvC (162 aa).

Catalysis depends on residues Asp-7, Glu-67, and Asp-140. Mg(2+)-binding residues include Asp-7, Glu-67, and Asp-140.

Belongs to the RuvC family. Homodimer which binds Holliday junction (HJ) DNA. The HJ becomes 2-fold symmetrical on binding to RuvC with unstacked arms; it has a different conformation from HJ DNA in complex with RuvA. In the full resolvosome a probable DNA-RuvA(4)-RuvB(12)-RuvC(2) complex forms which resolves the HJ. Mg(2+) is required as a cofactor.

The protein resides in the cytoplasm. The catalysed reaction is Endonucleolytic cleavage at a junction such as a reciprocal single-stranded crossover between two homologous DNA duplexes (Holliday junction).. The RuvA-RuvB-RuvC complex processes Holliday junction (HJ) DNA during genetic recombination and DNA repair. Endonuclease that resolves HJ intermediates. Cleaves cruciform DNA by making single-stranded nicks across the HJ at symmetrical positions within the homologous arms, yielding a 5'-phosphate and a 3'-hydroxyl group; requires a central core of homology in the junction. The consensus cleavage sequence is 5'-(A/T)TT(C/G)-3'. Cleavage occurs on the 3'-side of the TT dinucleotide at the point of strand exchange. HJ branch migration catalyzed by RuvA-RuvB allows RuvC to scan DNA until it finds its consensus sequence, where it cleaves and resolves the cruciform DNA. This chain is Crossover junction endodeoxyribonuclease RuvC, found in Heliobacterium modesticaldum (strain ATCC 51547 / Ice1).